The primary structure comprises 186 residues: Pyridoxal 5'-phosphate synthase subunit PdxT (186 aa).

Residue 46–48 (GES) coordinates L-glutamine. C75 functions as the Nucleophile in the catalytic mechanism. L-glutamine contacts are provided by residues R101 and 128–129 (IR). Residues H165 and E167 each act as charge relay system in the active site.

It belongs to the glutaminase PdxT/SNO family. In the presence of PdxS, forms a dodecamer of heterodimers. Only shows activity in the heterodimer.

The catalysed reaction is aldehydo-D-ribose 5-phosphate + D-glyceraldehyde 3-phosphate + L-glutamine = pyridoxal 5'-phosphate + L-glutamate + phosphate + 3 H2O + H(+). It catalyses the reaction L-glutamine + H2O = L-glutamate + NH4(+). The protein operates within cofactor biosynthesis; pyridoxal 5'-phosphate biosynthesis. In terms of biological role, catalyzes the hydrolysis of glutamine to glutamate and ammonia as part of the biosynthesis of pyridoxal 5'-phosphate. The resulting ammonia molecule is channeled to the active site of PdxS. The sequence is that of Pyridoxal 5'-phosphate synthase subunit PdxT from Methanocaldococcus jannaschii (strain ATCC 43067 / DSM 2661 / JAL-1 / JCM 10045 / NBRC 100440) (Methanococcus jannaschii).